The sequence spans 100 residues: Small ribosomal subunit protein uS14 (100 aa).

Belongs to the universal ribosomal protein uS14 family. Part of the 30S ribosomal subunit. Contacts proteins S3 and S10.

In terms of biological role, binds 16S rRNA, required for the assembly of 30S particles and may also be responsible for determining the conformation of the 16S rRNA at the A site. This Thermosynechococcus vestitus (strain NIES-2133 / IAM M-273 / BP-1) protein is Small ribosomal subunit protein uS14.